The chain runs to 232 residues: Octanoyltransferase (232 aa).

Residues 32 to 219 (DTIYDTLILL…SFMVFNFSSC (188 aa)) enclose the BPL/LPL catalytic domain. Substrate contacts are provided by residues 77-84 (RGGDITYH), 140-142 (AIG), and 153-155 (GFA). Catalysis depends on Cys171, which acts as the Acyl-thioester intermediate.

It belongs to the LipB family.

It is found in the cytoplasm. The catalysed reaction is octanoyl-[ACP] + L-lysyl-[protein] = N(6)-octanoyl-L-lysyl-[protein] + holo-[ACP] + H(+). It participates in protein modification; protein lipoylation via endogenous pathway; protein N(6)-(lipoyl)lysine from octanoyl-[acyl-carrier-protein]: step 1/2. Functionally, catalyzes the transfer of endogenously produced octanoic acid from octanoyl-acyl-carrier-protein onto the lipoyl domains of lipoate-dependent enzymes. Lipoyl-ACP can also act as a substrate although octanoyl-ACP is likely to be the physiological substrate. The polypeptide is Octanoyltransferase (Dictyoglomus thermophilum (strain ATCC 35947 / DSM 3960 / H-6-12)).